A 98-amino-acid chain; its full sequence is Omega-hexatoxin-Hr2b (98 aa).

A signal peptide spans 1–22; that stretch reads MKFSKLSLTLALILTQVLFVLC. Positions 24–56 are excised as a propeptide; that stretch reads KINEDFMKHGLESQALHDEIRKPIDSENPDTER. Disulfide bonds link Cys60–Cys74, Cys67–Cys80, and Cys73–Cys85. Residue Leu97 is modified to Leucine amide.

Belongs to the neurotoxin 15 family. 02 (omega-actx) subfamily. As to expression, expressed by the venom gland.

The protein localises to the secreted. In terms of biological role, potent inhibitor of insect, but not mammalian, voltage-gated calcium channels (Cav). This Atrax robustus (Sydney funnel-web spider) protein is Omega-hexatoxin-Hr2b.